The primary structure comprises 287 residues: Protease HtpX (287 aa).

Transmembrane regions (helical) follow at residues 4-24 and 33-53; these read IFLLIATNMAILLVASIVMSI and SGLLVFAAIFGFGGAFISLAI. A Zn(2+)-binding site is contributed by H139. E140 is a catalytic residue. Residue H143 coordinates Zn(2+). Transmembrane regions (helical) follow at residues 154-174 and 195-215; these read LIQGVVNTFVIFAARVVAGII and AVVFVLDMLFGILASIIVAYF. E220 provides a ligand contact to Zn(2+).

It belongs to the peptidase M48B family. Zn(2+) serves as cofactor.

It localises to the cell inner membrane. The polypeptide is Protease HtpX (Shewanella piezotolerans (strain WP3 / JCM 13877)).